The primary structure comprises 511 residues: Probable Xaa-Pro aminopeptidase MAA_08947 (511 aa).

Mn(2+) is bound by residues Asp-275, Asp-286, Glu-439, and Glu-480.

The protein belongs to the peptidase M24B family. The cofactor is Mn(2+).

It catalyses the reaction Release of any N-terminal amino acid, including proline, that is linked to proline, even from a dipeptide or tripeptide.. Catalyzes the removal of a penultimate prolyl residue from the N-termini of peptides. This is Probable Xaa-Pro aminopeptidase MAA_08947 from Metarhizium robertsii (strain ARSEF 23 / ATCC MYA-3075) (Metarhizium anisopliae (strain ARSEF 23)).